A 410-amino-acid chain; its full sequence is Serine hydroxymethyltransferase (410 aa).

(6S)-5,6,7,8-tetrahydrofolate contacts are provided by residues L116 and 120–122; that span reads GHL. K225 bears the N6-(pyridoxal phosphate)lysine mark. 349–351 contacts (6S)-5,6,7,8-tetrahydrofolate; sequence SPF.

Belongs to the SHMT family. Homodimer. It depends on pyridoxal 5'-phosphate as a cofactor.

Its subcellular location is the cytoplasm. The enzyme catalyses (6R)-5,10-methylene-5,6,7,8-tetrahydrofolate + glycine + H2O = (6S)-5,6,7,8-tetrahydrofolate + L-serine. Its pathway is one-carbon metabolism; tetrahydrofolate interconversion. It functions in the pathway amino-acid biosynthesis; glycine biosynthesis; glycine from L-serine: step 1/1. Catalyzes the reversible interconversion of serine and glycine with tetrahydrofolate (THF) serving as the one-carbon carrier. This reaction serves as the major source of one-carbon groups required for the biosynthesis of purines, thymidylate, methionine, and other important biomolecules. Also exhibits THF-independent aldolase activity toward beta-hydroxyamino acids, producing glycine and aldehydes, via a retro-aldol mechanism. This Leuconostoc citreum (strain KM20) protein is Serine hydroxymethyltransferase.